The sequence spans 282 residues: Farnesyl diphosphate synthase (282 aa).

K45, R48, and H77 together coordinate isopentenyl diphosphate. Residues D84 and D90 each coordinate Mg(2+). A (2E)-geranyl diphosphate-binding site is contributed by R95. Isopentenyl diphosphate is bound at residue R96. Positions 181, 182, and 220 each coordinate (2E)-geranyl diphosphate.

It belongs to the FPP/GGPP synthase family. The cofactor is Mg(2+).

It is found in the cytoplasm. The catalysed reaction is isopentenyl diphosphate + (2E)-geranyl diphosphate = (2E,6E)-farnesyl diphosphate + diphosphate. The polypeptide is Farnesyl diphosphate synthase (ispA) (Buchnera aphidicola subsp. Acyrthosiphon pisum (strain APS) (Acyrthosiphon pisum symbiotic bacterium)).